Here is a 512-residue protein sequence, read N- to C-terminus: Ankyrin repeat domain-containing protein SOWAHC (512 aa).

2 positions are modified to phosphoserine: Ser-82 and Ser-125. Residues 126–248 form a disordered region; the sequence is LGLGGEVSDQ…AEEESSVGAS (123 aa). Residues 173-186 are compositionally biased toward low complexity; that stretch reads PPQGEAEGGSSPSG. Phosphoserine is present on Ser-205. A compositionally biased stretch (gly residues) spans 214 to 228; the sequence is PGDGNAGGRSRGGGD. The segment covering 229-248 has biased composition (low complexity); it reads SDTASLASSSAEEESSVGAS. ANK repeat units follow at residues 288 to 317 and 327 to 357; these read TGFT…KHQL and GGYT…DVDI. Arg-395 carries the omega-N-methylarginine modification. Positions 427-500 are disordered; that stretch reads HVPEGWTGGS…EERSLRGYSS (74 aa). Over residues 453 to 462 the composition is skewed to basic residues; the sequence is MKPRLNKIRF. The span at 481-492 shows a compositional bias: acidic residues; sequence EEGEEEEEEEEE.

Belongs to the SOWAH family.

This Mus musculus (Mouse) protein is Ankyrin repeat domain-containing protein SOWAHC (Sowahc).